The primary structure comprises 479 residues: Muscarinic acetylcholine receptor M4 (479 aa).

At 1 to 31 the chain is on the extracellular side; that stretch reads MANFTPVNGSSGNQSVRLVTSSSHNRYETVE. N-linked (GlcNAc...) asparagine glycans are attached at residues N8 and N13. Residues 32–54 form a helical membrane-spanning segment; it reads MVFIATVTGSLSLVTVVGNILVM. At 55–68 the chain is on the cytoplasmic side; that stretch reads LSIKVNRQLQTVNN. The chain crosses the membrane as a helical span at residues 69–89; the sequence is YFLFSLACADLIIGAFSMNLY. At 90-106 the chain is on the extracellular side; the sequence is TVYIIKGYWPLGAVVCD. A disulfide bridge links C105 with C185. A helical membrane pass occupies residues 107 to 128; sequence LWLALDYVVSNASVMNLLIISF. Residues 129–148 are Cytoplasmic-facing; it reads DRYFCVTKPLTYPARRTTKM. The chain crosses the membrane as a helical span at residues 149 to 171; it reads AGLMIAAAWVLSFVLWAPAILFW. The Extracellular segment spans residues 172-193; sequence QFVVGKRTVPDNQCFIQFLSNP. Residues 194 to 216 form a helical membrane-spanning segment; the sequence is AVTFGTAIAAFYLPVVIMTVLYI. Topologically, residues 217 to 401 are cytoplasmic; that stretch reads HISLASRSRV…AARERKVTRT (185 aa). The tract at residues 271–333 is disordered; it reads KLEEAPPPAL…PAPPLQPRAL (63 aa). Over residues 275 to 286 the composition is skewed to pro residues; sequence APPPALPPPPRP. The span at 294–304 shows a compositional bias: polar residues; sequence NESSSGSATQN. A helical membrane pass occupies residues 402-422; that stretch reads IFAILLAFILTWTPYNVMVLV. The Extracellular portion of the chain corresponds to 423 to 436; the sequence is NTFCQSCIPDTVWS. The chain crosses the membrane as a helical span at residues 437-456; sequence IGYWLCYVNSTINPACYALC. Residues 457 to 479 are Cytoplasmic-facing; that stretch reads NATFKKTFRHLLLCQYRNIGTAR. Phosphothreonine is present on residues T459, T463, and T477.

The protein belongs to the G-protein coupled receptor 1 family. Muscarinic acetylcholine receptor subfamily. CHRM4 sub-subfamily.

It localises to the cell membrane. Its subcellular location is the postsynaptic cell membrane. Its function is as follows. The muscarinic acetylcholine receptor mediates various cellular responses, including inhibition of adenylate cyclase, breakdown of phosphoinositides and modulation of potassium channels through the action of G proteins. Primary transducing effect is inhibition of adenylate cyclase. This Homo sapiens (Human) protein is Muscarinic acetylcholine receptor M4 (CHRM4).